Reading from the N-terminus, the 327-residue chain is Surface protein P12p (327 aa).

2 consecutive 6-Cys domains span residues 21 to 168 (NIEI…LKKN) and 169 to 304 (IIFG…FSNY). 6 disulfide bridges follow: Cys25/Cys60, Cys74/Cys144, Cys93/Cys142, Cys173/Cys208, Cys223/Cys285, and Cys234/Cys283. Asn246, Asn264, and Asn298 each carry an N-linked (GlcNAc...) asparagine glycan.

The protein resides in the cell surface. The protein localises to the cell membrane. In Plasmodium berghei (strain Anka), this protein is Surface protein P12p (P12p).